Here is a 314-residue protein sequence, read N- to C-terminus: L-lactate dehydrogenase (314 aa).

NAD(+) is bound by residues valine 16, aspartate 37, lysine 42, tyrosine 68, and 82 to 83; that span reads GV. Substrate-binding residues include glutamine 85 and arginine 91. Residues serine 104, 121-123, and threonine 146 contribute to the NAD(+) site; that span reads ASN. Residue 123–126 participates in substrate binding; the sequence is NPVD. A substrate-binding site is contributed by 151–154; it reads DTTR. The beta-D-fructose 1,6-bisphosphate site is built by arginine 156 and histidine 171. Catalysis depends on histidine 178, which acts as the Proton acceptor. At tyrosine 223 the chain carries Phosphotyrosine. Threonine 232 serves as a coordination point for substrate.

This sequence belongs to the LDH/MDH superfamily. LDH family. In terms of assembly, homotetramer.

Its subcellular location is the cytoplasm. The enzyme catalyses (S)-lactate + NAD(+) = pyruvate + NADH + H(+). It functions in the pathway fermentation; pyruvate fermentation to lactate; (S)-lactate from pyruvate: step 1/1. With respect to regulation, allosterically activated by fructose 1,6-bisphosphate (FBP). In terms of biological role, catalyzes the conversion of lactate to pyruvate. This is L-lactate dehydrogenase from Lactococcus lactis subsp. cremoris (strain MG1363).